We begin with the raw amino-acid sequence, 571 residues long: 5' exonuclease Apollo (571 aa).

Disordered regions lie at residues 346–386 (TSRP…TDRN) and 431–487 (MDDN…SMHD). 2 stretches are compositionally biased toward basic and acidic residues: residues 367 to 386 (NHDD…TDRN) and 453 to 468 (ECDH…EKSP). Polar residues predominate over residues 470 to 487 (MGSTNSGEMCSSMDSMHD). The TBM signature appears at 501 to 532 (NPQSVTSAIPITLESEQFEHWLLENFTIPAEE).

It belongs to the DNA repair metallo-beta-lactamase (DRMBL) family. Interacts with terf2; the interaction is direct.

It is found in the chromosome. It localises to the telomere. The protein resides in the nucleus. The catalysed reaction is a beta-lactam + H2O = a substituted beta-amino acid. In terms of biological role, 5'-3' exonuclease that plays a central role in telomere maintenance and protection during S-phase. Participates in the protection of telomeres against non-homologous end-joining (NHEJ)-mediated repair, thereby ensuring that telomeres do not fuse. Plays a key role in telomeric loop (T loop) formation by being recruited by terf2 at the leading end telomeres and by processing leading-end telomeres immediately after their replication via its exonuclease activity: generates 3' single-stranded overhang at the leading end telomeres avoiding blunt leading-end telomeres that are vulnerable to end-joining reactions and expose the telomere end in a manner that activates the DNA repair pathways. Possesses beta-lactamase activity, catalyzing the hydrolysis of penicillin G and nitrocefin. Exhibits no activity towards other beta-lactam antibiotic classes including cephalosporins (cefotaxime) and carbapenems (imipenem). The chain is 5' exonuclease Apollo (dclre1b) from Danio rerio (Zebrafish).